The chain runs to 337 residues: Protein AMBP (337 aa).

A signal peptide spans alanine 1–alanine 4. Positions 38 and 96 each coordinate 3-hydroxy-L-kynurenine. Cysteines 76 and 173 form a disulfide. Asparagine 100 carries an N-linked (GlcNAc...) asparagine glycan. Lysine 122 and lysine 134 together coordinate 3-hydroxy-L-kynurenine. An O-linked (Xyl...) (chondroitin sulfate) serine glycan is attached at serine 200. 6 disulfide bridges follow: cysteine 216–cysteine 266, cysteine 225–cysteine 249, cysteine 241–cysteine 262, cysteine 272–cysteine 322, cysteine 281–cysteine 305, and cysteine 297–cysteine 318. BPTI/Kunitz inhibitor domains lie at cysteine 216–cysteine 266 and cysteine 272–cysteine 322. Asparagine 235 carries N-linked (GlcNAc...) asparagine glycosylation.

This sequence in the N-terminal section; belongs to the calycin superfamily. Lipocalin family. In terms of assembly, monomer. Homodimer. In plasma, it occurs as a monomer or dimer and in covalently-linked complexes with immunoglobulin A (IgA), ALB/albumin and F2/prothrombin. Chromophore-bound alpha-1-microglobulin interacts with the constant region of immunoglobulin A. Chromophore-bound alpha-1-microglobulin interacts with ALB with molar ratio 2:1 and 1:1; this interaction does not prevent fatty acid binding to ALB. Interacts with F2/prothrombin (via N-terminus) with molar ratio 2:1 and 1:1; this interaction does not prevent the activation of prothrombin to thrombin. Interacts with NDUFAB1, a subunit of mitochondrial complex I. Interacts with FN1. I-alpha-I plasma protease inhibitors are assembled from one or two heavy chains (HC) and one light chain, bikunin. Inter-alpha-inhibitor (I-alpha-I) is composed of ITIH1/HC1, ITIH2/HC2 and bikunin, and pre-alpha-inhibitor (P-alpha-I) of ITIH3/HC3 and bikunin. Interacts with TNFAIP6 (via Link domain). As to quaternary structure, monomer. Also occurs as a complex with tryptase in mast cells. In terms of processing, the precursor is proteolytically processed into separately functioning proteins. Post-translationally, proteolytically cleaved in the presence of oxyhemoglobin or MPO. 3-hydroxykynurenine, an oxidized tryptophan metabolite that is common in biological fluids, reacts with Cys-53, Lys-111, Lys-137, and Lys-149 to form heterogeneous polycyclic chromophores including hydroxanthommatin. The reaction by alpha-1-microglobulin is autocatalytic; the human protein forms chromophore even when expressed in insect and bacterial cells. The chromophore can react with accessible cysteines forming non-reducible thioether cross-links with other molecules of alpha-1-microglobulin or with other proteins such as Ig alpha-1 chain C region 'Cys-352'. In terms of processing, heavy chains are interlinked with bikunin via a chondroitin 4-sulfate bridge to the C-terminal aspartate. Post-translationally, proteolytically cleaved by PRSS3 at Kunitz domain 2. As to expression, expressed by the liver and secreted in plasma.

Its subcellular location is the secreted. The protein localises to the endoplasmic reticulum. It is found in the cytoplasm. It localises to the cytosol. The protein resides in the cell membrane. Its subcellular location is the nucleus membrane. The protein localises to the mitochondrion inner membrane. It is found in the extracellular space. It localises to the extracellular matrix. In terms of biological role, antioxidant and tissue repair protein with reductase, heme-binding and radical-scavenging activities. Removes and protects against harmful oxidants and repairs macromolecules in intravascular and extravascular spaces and in intracellular compartments. Intravascularly, plays a regulatory role in red cell homeostasis by preventing heme- and reactive oxygen species-induced cell damage. Binds and degrades free heme to protect fetal and adult red blood cells from hemolysis. Reduces extracellular methemoglobin, a Fe3+ (ferric) form of hemoglobin that cannot bind oxygen, back to the Fe2+ (ferrous) form deoxyhemoglobin, which has oxygen-carrying potential. Upon acute inflammation, inhibits oxidation of low-density lipoprotein particles by MPO and limits vascular damage. Extravascularly, protects from oxidation products formed on extracellular matrix structures and cell membranes. Catalyzes the reduction of carbonyl groups on oxidized collagen fibers and preserves cellular and extracellular matrix ultrastructures. Importantly, counteracts the oxidative damage at blood-placenta interface, preventing leakage of free fetal hemoglobin into the maternal circulation. Intracellularly, has a role in maintaining mitochondrial redox homeostasis. Bound to complex I of the respiratory chain of mitochondria, may scavenge free radicals and preserve mitochondrial ATP synthesis. Protects renal tubule epithelial cells from heme-induced oxidative damage to mitochondria. Reduces cytochrome c from Fe3+ (ferric) to the Fe2+ (ferrous) state through formation of superoxide anion radicals in the presence of ascorbate or NADH/NADPH electron donor cofactors, ascorbate being the preferred cofactor. Has a chaperone role in facilitating the correct folding of bikunin in the endoplasmic reticulum compartment. Functionally, kunitz-type serine protease inhibitor and structural component of extracellular matrix with a role in extracellular space remodeling and cell adhesion. Among others, has antiprotease activity toward kallikrein, a protease involved in airway inflammation; inhibits GZMK/granzyme, a granule-stored serine protease involved in NK and T cell cytotoxic responses; and inhibits PLG/plasmin, a protease required for activation of matrix metalloproteinases. As part of I-alpha-I complex, provides for the heavy chains to be transferred from I-alpha-I complex to hyaluronan in the presence of TNFAIP6, in a dynamic process that releases free bikunin and remodels extracellular matrix proteoglycan structures. Free bikunin, but not its heavy chain-bound form, acts as a potent protease inhibitor in airway secretions. Part of hyaluronan-rich extracellular matrix that surrounds oocyte during cumulus oophorus expansion, an indispensable process for proper ovulation. Also inhibits calcium oxalate crystallization. Kunitz-type serine protease inhibitor. Has high catalytic efficiency for F10/blood coagulation factor Xa and may act as an anticoagulant by inhibiting prothrombin activation. Inhibits trypsin and mast cell CMA1/chymase and tryptase proteases. In Sus scrofa (Pig), this protein is Protein AMBP (AMBP).